A 260-amino-acid polypeptide reads, in one-letter code: UPF0246 protein Veis_4789 (260 aa).

This sequence belongs to the UPF0246 family.

The polypeptide is UPF0246 protein Veis_4789 (Verminephrobacter eiseniae (strain EF01-2)).